The chain runs to 689 residues: Long-chain fatty acid transport protein 5 (689 aa).

The Cytoplasmic segment spans residues 1–29 (MGIWKKLTLLLLLLLLVGLGQPPWPAAMA). A run of 2 helical transmembrane segments spans residues 30–50 (LALR…LALL) and 55–75 (ISSW…LFLL). Residues 76–689 (PLQPPPGLRW…QAVCEGTWNL (614 aa)) lie on the Cytoplasmic side of the membrane. AMP is bound at residue 292–303 (IFTSGTTGLPKP).

This sequence belongs to the ATP-dependent AMP-binding enzyme family. Liver-specific (at protein level). In liver expressed in a periportal distribution.

Its subcellular location is the endoplasmic reticulum membrane. It is found in the microsome. The protein localises to the cell membrane. It carries out the reaction a fatty acid(in) = a fatty acid(out). It catalyses the reaction cholate + ATP + CoA = choloyl-CoA + AMP + diphosphate. The enzyme catalyses (25R)-3alpha,7alpha,12alpha-trihydroxy-5beta-cholestan-26-oate + ATP + CoA = (25R)-3alpha,7alpha,12alpha-trihydroxy-5beta-cholestan-26-oyl-CoA + AMP + diphosphate. The catalysed reaction is chenodeoxycholate + ATP + CoA = chenodeoxycholoyl-CoA + AMP + diphosphate. It carries out the reaction deoxycholate + ATP + CoA = deoxycholoyl-CoA + AMP + diphosphate. It catalyses the reaction lithocholate + ATP + CoA = lithocholoyl-CoA + AMP + diphosphate. The enzyme catalyses a very long-chain fatty acid + ATP + CoA = a very long-chain fatty acyl-CoA + AMP + diphosphate. The catalysed reaction is tetracosanoate + ATP + CoA = tetracosanoyl-CoA + AMP + diphosphate. It carries out the reaction hexacosanoate + ATP + CoA = hexacosanoyl-CoA + AMP + diphosphate. It catalyses the reaction a long-chain fatty acid + ATP + CoA = a long-chain fatty acyl-CoA + AMP + diphosphate. The enzyme catalyses octadecanoate + ATP + CoA = octadecanoyl-CoA + AMP + diphosphate. The catalysed reaction is eicosanoate + ATP + CoA = eicosanoyl-CoA + AMP + diphosphate. In terms of biological role, mediates the import of long-chain fatty acids (LCFA) by facilitating their transport across cell membranes. Also catalyzes the ATP-dependent formation of fatty acyl-CoA using LCFA and very-long-chain fatty acids (VLCFA) as substrates. Mainly functions as a bile acyl-CoA synthetase catalyzing the activation of bile acids via ATP-dependent formation of bile acid CoA thioesters which is necessary for their subsequent conjugation with glycine or taurine. Both primary bile acids (cholic acid and chenodeoxycholic acid) and secondary bile acids (deoxycholic acid and lithocholic acid) are the principal substrates. In vitro, activates 3-alpha,7-alpha,12-alpha-trihydroxy-5-beta-cholestanate ((25R)-3alpha,7alpha,12alpha-trihydroxy-5beta-cholestan-26-oate or THCA), the C27 precursor of cholic acid deriving from the de novo synthesis from cholesterol. Plays an important role in hepatic fatty acid uptake and bile acid reconjugation and recycling but not in de novo synthesis of bile acids. The polypeptide is Long-chain fatty acid transport protein 5 (Slc27a5) (Mus musculus (Mouse)).